A 320-amino-acid polypeptide reads, in one-letter code: Beta-ketoacyl-[acyl-carrier-protein] synthase III (320 aa).

Residues cysteine 114 and histidine 247 contribute to the active site. The ACP-binding stretch occupies residues 248-252 (QANRR). The active site involves asparagine 277.

The protein belongs to the thiolase-like superfamily. FabH family. In terms of assembly, homodimer.

It localises to the cytoplasm. It carries out the reaction malonyl-[ACP] + acetyl-CoA + H(+) = 3-oxobutanoyl-[ACP] + CO2 + CoA. Its pathway is lipid metabolism; fatty acid biosynthesis. Functionally, catalyzes the condensation reaction of fatty acid synthesis by the addition to an acyl acceptor of two carbons from malonyl-ACP. Catalyzes the first condensation reaction which initiates fatty acid synthesis and may therefore play a role in governing the total rate of fatty acid production. Possesses both acetoacetyl-ACP synthase and acetyl transacylase activities. Its substrate specificity determines the biosynthesis of branched-chain and/or straight-chain of fatty acids. This Neisseria meningitidis serogroup A / serotype 4A (strain DSM 15465 / Z2491) protein is Beta-ketoacyl-[acyl-carrier-protein] synthase III.